The following is a 638-amino-acid chain: Threonine--tRNA ligase (638 aa).

A TGS domain is found at 1–61; the sequence is MPVITLPDGS…DADAQLQIIT (61 aa). The catalytic stretch occupies residues 243 to 534; sequence DHRKIGKALN…LTEEFAGFFP (292 aa). Cys334, His385, and His511 together coordinate Zn(2+).

It belongs to the class-II aminoacyl-tRNA synthetase family. Homodimer. The cofactor is Zn(2+).

Its subcellular location is the cytoplasm. The enzyme catalyses tRNA(Thr) + L-threonine + ATP = L-threonyl-tRNA(Thr) + AMP + diphosphate + H(+). Functionally, catalyzes the attachment of threonine to tRNA(Thr) in a two-step reaction: L-threonine is first activated by ATP to form Thr-AMP and then transferred to the acceptor end of tRNA(Thr). Also edits incorrectly charged L-seryl-tRNA(Thr). The chain is Threonine--tRNA ligase from Alteromonas mediterranea (strain DSM 17117 / CIP 110805 / LMG 28347 / Deep ecotype).